The following is a 688-amino-acid chain: MAKIKKKGTSGAAKNYITRTQAVRKLQISLPDFRRLCIFKGIYPREPRNKKKASKTSTPSTTFYYTRDIQYLLHEPLLKRFRDQKALSKKIARSLGRGDVGDAARLEKNNAPKITLDHIVKERYPTFIDALRDLDDALSLLFLFANLPSTANVPPKTIALCQRLCHEFQHYLIATNSLRKSFLSIKGIYYQATIQGQDILWLVPYRFVQQVTGDVDYRIMATFVEFYTTLLGFVNFRLYTSIGLVYPPKFDSRSDERGAELAAFTLEGRKVGEMQKAISSEPQTNGQLAKSDSAANDIQAKVDNILKETTRNNEPDDEAVDVEDNVDAIDKFETTAPEADTLPQPQMSGNEVASLFASFTFFISREAPRGPLEFLLRAFGCKRVGWDAVLGEGAFTHDETDPRITHQIVDRPPLPESALPPLPQNPGEGAEKAPRVRPGTRMPGRMYIQPQWVWDCVNEGKLLRHDLYAPGATLPPHLSPWVKASKGGYDPRLSLAEQESDGEAERQAEEENEEEESEVEGLSMDKEMVETENSEAGESDEESVDGGMDVDIPGSDDEEEESEEDNALRELGGSDEAADVQSESEDDEEAARNQHQMELEAEAAGLPFTGADGTGTSSKKSKKQKPLAKKHAAQKKKEQEELERQKMMMSRKKRKLLDKMLYSNKKKDEEAEKLRRKRRKIEQGTKGR.

The BRCT domain maps to 351 to 470 (EVASLFASFT…KLLRHDLYAP (120 aa)). Disordered stretches follow at residues 411 to 442 (RPPL…GTRM) and 496 to 688 (AEQE…TKGR). Pro residues predominate over residues 412–424 (PPLPESALPPLPQ). Residues 496 to 536 (AEQESDGEAERQAEEENEEEESEVEGLSMDKEMVETENSEA) are a coiled coil. Composition is skewed to acidic residues over residues 510–519 (EENEEEESEV), 530–544 (ETEN…EESV), 554–565 (GSDDEEEESEED), and 576–589 (EAAD…DDEE). The segment covering 619-634 (KKSKKQKPLAKKHAAQ) has biased composition (basic residues). Residues 627–686 (LAKKHAAQKKKEQEELERQKMMMSRKKRKLLDKMLYSNKKKDEEAEKLRRKRRKIEQGTK) are a coiled coil. Basic and acidic residues predominate over residues 635–646 (KKKEQEELERQK).

It belongs to the pescadillo family. As to quaternary structure, component of the NOP7 complex, composed of ERB1, NOP7 and YTM1. The complex is held together by ERB1, which interacts with NOP7 via its N-terminal domain and with YTM1 via a high-affinity interaction between the seven-bladed beta-propeller domains of the 2 proteins. The NOP7 complex associates with the 66S pre-ribosome.

It is found in the nucleus. Its subcellular location is the nucleolus. It localises to the nucleoplasm. Its function is as follows. Component of the NOP7 complex, which is required for maturation of the 25S and 5.8S ribosomal RNAs and formation of the 60S ribosome. The sequence is that of Pescadillo homolog from Coccidioides immitis (strain RS) (Valley fever fungus).